Here is a 180-residue protein sequence, read N- to C-terminus: MSNGIVAKRYAVALFKIAKEKHVLEMFEEELRLVQNVYVKNGELHSFLTQPNISKEQKKTFLANVFGSVSESILNTLYILIDNKRIDILPEIADEYVVLANEERNVADATVYSTRLLSEEEKLNIAEAFAKRTGKDAIRVKNVVDEDLLGGIKVRIGNRIYDGSLQGKLARIQRELMKNR.

It belongs to the ATPase delta chain family. As to quaternary structure, F-type ATPases have 2 components, F(1) - the catalytic core - and F(0) - the membrane proton channel. F(1) has five subunits: alpha(3), beta(3), gamma(1), delta(1), epsilon(1). F(0) has three main subunits: a(1), b(2) and c(10-14). The alpha and beta chains form an alternating ring which encloses part of the gamma chain. F(1) is attached to F(0) by a central stalk formed by the gamma and epsilon chains, while a peripheral stalk is formed by the delta and b chains.

The protein localises to the cell membrane. F(1)F(0) ATP synthase produces ATP from ADP in the presence of a proton or sodium gradient. F-type ATPases consist of two structural domains, F(1) containing the extramembraneous catalytic core and F(0) containing the membrane proton channel, linked together by a central stalk and a peripheral stalk. During catalysis, ATP synthesis in the catalytic domain of F(1) is coupled via a rotary mechanism of the central stalk subunits to proton translocation. In terms of biological role, this protein is part of the stalk that links CF(0) to CF(1). It either transmits conformational changes from CF(0) to CF(1) or is implicated in proton conduction. The chain is ATP synthase subunit delta from Bacillus cereus (strain B4264).